Reading from the N-terminus, the 501-residue chain is Protein NBA1 (501 aa).

2 disordered regions span residues 1-78 (MSEE…PGDN) and 102-133 (NRQQTQERRTSKDSNSLYSLKEPVSKNELPSL). Residues 11-20 (SRATLNTQRL) show a composition bias toward polar residues. Positions 46-55 (ITEEKADQSD) are enriched in basic and acidic residues. Position 138 is a phosphoserine (serine 138). The tract at residues 146–165 (LSDNQSTKSNTNADEIVIKP) is disordered. Positions 148 to 158 (DNQSTKSNTNA) are enriched in polar residues. Position 208 is a phosphoserine (serine 208). 2 disordered regions span residues 267–286 (PIRSETNDYNPTIPPRSKDR) and 338–366 (AATSMPPEEETYLTRPLPSTPNEDSRVTS). A necessary for the normal cellular distribution and bud neck targeting region spans residues 275-501 (YNPTIPPRSK…DKATKALEGF (227 aa)). Threonine 403 carries the post-translational modification Phosphothreonine.

In terms of assembly, interacts with NAP1 (via the central domain consisting of amino acids 143 to 362). Copurifies with ribosomes. In terms of processing, phosphorylated by CDC28.

It is found in the bud neck. The protein localises to the cytoplasm. In Saccharomyces cerevisiae (strain ATCC 204508 / S288c) (Baker's yeast), this protein is Protein NBA1 (NBA1).